A 1221-amino-acid polypeptide reads, in one-letter code: DNA-directed RNA polymerase subunit beta (1221 aa).

A disordered region spans residues 1176 to 1221 (EKKKLAEEEAEIAAEAEAEGSAEGDAAEADADANEAETADDDKASK). The segment covering 1183 to 1215 (EEAEIAAEAEAEGSAEGDAAEADADANEAETAD) has biased composition (acidic residues).

Belongs to the RNA polymerase beta chain family. As to quaternary structure, the RNAP catalytic core consists of 2 alpha, 1 beta, 1 beta' and 1 omega subunit. When a sigma factor is associated with the core the holoenzyme is formed, which can initiate transcription.

It catalyses the reaction RNA(n) + a ribonucleoside 5'-triphosphate = RNA(n+1) + diphosphate. DNA-dependent RNA polymerase catalyzes the transcription of DNA into RNA using the four ribonucleoside triphosphates as substrates. The polypeptide is DNA-directed RNA polymerase subunit beta (Lactobacillus delbrueckii subsp. bulgaricus (strain ATCC 11842 / DSM 20081 / BCRC 10696 / JCM 1002 / NBRC 13953 / NCIMB 11778 / NCTC 12712 / WDCM 00102 / Lb 14)).